The sequence spans 475 residues: Sulfate adenylyltransferase subunit 1 (475 aa).

One can recognise a tr-type G domain in the interval lysine 25–arginine 239. The segment at glycine 34–serine 41 is G1. GTP is bound at residue glycine 34 to serine 41. The interval glycine 92–aspartate 96 is G2. Positions aspartate 113 to glycine 116 are G3. Residues aspartate 113–histidine 117 and asparagine 168–aspartate 171 each bind GTP. A G4 region spans residues asparagine 168 to aspartate 171. Residues serine 206–leucine 208 are G5.

Belongs to the TRAFAC class translation factor GTPase superfamily. Classic translation factor GTPase family. CysN/NodQ subfamily. In terms of assembly, heterodimer composed of CysD, the smaller subunit, and CysN.

It catalyses the reaction sulfate + ATP + H(+) = adenosine 5'-phosphosulfate + diphosphate. The protein operates within sulfur metabolism; hydrogen sulfide biosynthesis; sulfite from sulfate: step 1/3. Functionally, with CysD forms the ATP sulfurylase (ATPS) that catalyzes the adenylation of sulfate producing adenosine 5'-phosphosulfate (APS) and diphosphate, the first enzymatic step in sulfur assimilation pathway. APS synthesis involves the formation of a high-energy phosphoric-sulfuric acid anhydride bond driven by GTP hydrolysis by CysN coupled to ATP hydrolysis by CysD. The protein is Sulfate adenylyltransferase subunit 1 of Shigella flexneri.